A 574-amino-acid chain; its full sequence is EEDIIITTKNGKVRGMNLPVLGGTVTAFLGIPYAQPPLGRLRFKKPQSLTKWSNIWNATKYANSCYQNTDQSFPGFLGSEMWNPNTELSEDCLYLNVWIPAPKPKNATVMIWIYGGGFQTGTSSLPVYDGKFLARVERVIVVSMNYRVGALGFLALSENPEAPGNMGLFDQQLALQWVQKNIAAFGGNPRSVTLFGESAGAASVSLHLLSPRSQPLFTRAILQSGSSNAPWAVTSLYEARNRTLTLAKRMGCSRDNETEMIKCLRDKDPQEILLNEVFVVPYDTLLSVNFGPTVDGDFLTDMPDTLLQLGQFKRTQILVGVNKDEGTAFLVYGAPGFSKDNNSIITRKEFQEGLKIFFPRVSEFGRESILFHYMDWLDDQRAENYREALDDVVGDYNIICPALEFTRKFSELGNDAFFYYFEHRSTKLPWPEWMGVMHGYEIEFVFGLPLERRVNYTRAEEILSRSIMKRWANFAKYGNPNGTQNNSTRWPVFKSTEQKYLTLNTESPKVYTKLRAQQCRFWTLFFPKVLELTGNIDEAEREWKAGFHRWNNYMMDWKNQFNDYTSKKESCSDF.

An N-linked (GlcNAc...) asparagine glycan is attached at Asn57. The cysteines at positions 65 and 92 are disulfide-linked. The N-linked (GlcNAc...) asparagine glycan is linked to Asn106. 116 to 117 (GG) is a substrate binding site. Catalysis depends on Ser198, which acts as the Acyl-ester intermediate. Residue Ser198 is modified to Phosphoserine. Asn241 and Asn256 each carry an N-linked (GlcNAc...) asparagine glycan. A disulfide bridge connects residues Cys252 and Cys263. Catalysis depends on Glu325, which acts as the Charge relay system. Asn341 is a glycosylation site (N-linked (GlcNAc...) asparagine). A disulfide bridge connects residues Cys400 and Cys519. His438 functions as the Charge relay system in the catalytic mechanism. N-linked (GlcNAc...) asparagine glycosylation is found at Asn455, Asn481, and Asn486.

It belongs to the type-B carboxylesterase/lipase family. In terms of assembly, homotetramer; disulfide-linked. Dimer of dimers. In terms of tissue distribution, detected in blood plasma (at protein level). Present in most cells except erythrocytes.

It is found in the secreted. The catalysed reaction is an acylcholine + H2O = a carboxylate + choline + H(+). Its function is as follows. Esterase with broad substrate specificity. Contributes to the inactivation of the neurotransmitter acetylcholine. Can degrade neurotoxic organophosphate esters. In Equus caballus (Horse), this protein is Cholinesterase (BCHE).